Here is a 706-residue protein sequence, read N- to C-terminus: Ribosomal RNA large subunit methyltransferase K/L (706 aa).

The region spanning 43–154 (LMYQSLLWSR…RDMASVALDL (112 aa)) is the THUMP domain.

This sequence belongs to the methyltransferase superfamily. RlmKL family.

It is found in the cytoplasm. It catalyses the reaction guanosine(2445) in 23S rRNA + S-adenosyl-L-methionine = N(2)-methylguanosine(2445) in 23S rRNA + S-adenosyl-L-homocysteine + H(+). The enzyme catalyses guanosine(2069) in 23S rRNA + S-adenosyl-L-methionine = N(2)-methylguanosine(2069) in 23S rRNA + S-adenosyl-L-homocysteine + H(+). Functionally, specifically methylates the guanine in position 2445 (m2G2445) and the guanine in position 2069 (m7G2069) of 23S rRNA. This chain is Ribosomal RNA large subunit methyltransferase K/L, found in Yersinia pestis bv. Antiqua (strain Antiqua).